The following is a 556-amino-acid chain: DNA ligase (556 aa).

Position 245 (E245) interacts with ATP. The active-site N6-AMP-lysine intermediate is K247. ATP contacts are provided by R252, R267, E296, F336, R408, and K414.

It belongs to the ATP-dependent DNA ligase family. Requires Mg(2+) as cofactor.

The enzyme catalyses ATP + (deoxyribonucleotide)n-3'-hydroxyl + 5'-phospho-(deoxyribonucleotide)m = (deoxyribonucleotide)n+m + AMP + diphosphate.. In terms of biological role, DNA ligase that seals nicks in double-stranded DNA during DNA replication, DNA recombination and DNA repair. This Methanosphaerula palustris (strain ATCC BAA-1556 / DSM 19958 / E1-9c) protein is DNA ligase.